The sequence spans 141 residues: Ribosome-binding factor A (141 aa).

The tract at residues 120–141 is disordered; that stretch reads DEALRAQSAGARPAGDEDPYKP.

This sequence belongs to the RbfA family. In terms of assembly, monomer. Binds 30S ribosomal subunits, but not 50S ribosomal subunits or 70S ribosomes.

The protein resides in the cytoplasm. One of several proteins that assist in the late maturation steps of the functional core of the 30S ribosomal subunit. Associates with free 30S ribosomal subunits (but not with 30S subunits that are part of 70S ribosomes or polysomes). Required for efficient processing of 16S rRNA. May interact with the 5'-terminal helix region of 16S rRNA. This Corynebacterium jeikeium (strain K411) protein is Ribosome-binding factor A.